The chain runs to 318 residues: MTYLEFEKPLADLEGKAEELRALARKGEGVDLEKEAAALDRKAEEMLRDLYKQLDPWRKTQVARHPERPHCRDYVEALFTEYTPLAGDRAFGEDHAVMGGLARFKDQPCVVIGHEKGNDTKSRIFHNFGMARPEGYRKAIRLMDVADRFRLPVITLVDTPGAYPGKGAEERGQSEAIARSTEKCLQISVPLVSVVIGEGGSGGAVAFATANRIAMLEHSIYSVISPEGCASILWKDAEKMREAAHALKLTAQDLKKLEVIDRIISEPVGGAQRAPAEAIAAVGEAIAAMLGELAGKKPAELIKDRRQKFLAMGSKALG.

Residues 38-292 (ALDRKAEEML…GEAIAAMLGE (255 aa)) enclose the CoA carboxyltransferase C-terminal domain.

The protein belongs to the AccA family. In terms of assembly, acetyl-CoA carboxylase is a heterohexamer composed of biotin carboxyl carrier protein (AccB), biotin carboxylase (AccC) and two subunits each of ACCase subunit alpha (AccA) and ACCase subunit beta (AccD).

It is found in the cytoplasm. It carries out the reaction N(6)-carboxybiotinyl-L-lysyl-[protein] + acetyl-CoA = N(6)-biotinyl-L-lysyl-[protein] + malonyl-CoA. It functions in the pathway lipid metabolism; malonyl-CoA biosynthesis; malonyl-CoA from acetyl-CoA: step 1/1. In terms of biological role, component of the acetyl coenzyme A carboxylase (ACC) complex. First, biotin carboxylase catalyzes the carboxylation of biotin on its carrier protein (BCCP) and then the CO(2) group is transferred by the carboxyltransferase to acetyl-CoA to form malonyl-CoA. The chain is Acetyl-coenzyme A carboxylase carboxyl transferase subunit alpha from Paracoccus denitrificans (strain Pd 1222).